A 278-amino-acid polypeptide reads, in one-letter code: NADPH-dependent 7-cyano-7-deazaguanine reductase (278 aa).

87 to 89 lines the substrate pocket; it reads IES. Residue 89–90 participates in NADPH binding; that stretch reads SK. Cysteine 185 (thioimide intermediate) is an active-site residue. Catalysis depends on aspartate 192, which acts as the Proton donor. 224 to 225 serves as a coordination point for substrate; sequence HE. 253-254 contributes to the NADPH binding site; that stretch reads RG. The segment at 255–278 is disordered; the sequence is GLDINPYRSTNPTFSVQNHRSFRQ. Residues 261 to 278 show a composition bias toward polar residues; that stretch reads YRSTNPTFSVQNHRSFRQ.

The protein belongs to the GTP cyclohydrolase I family. QueF type 2 subfamily. As to quaternary structure, homodimer.

The protein localises to the cytoplasm. It catalyses the reaction 7-aminomethyl-7-carbaguanine + 2 NADP(+) = 7-cyano-7-deazaguanine + 2 NADPH + 3 H(+). Its pathway is tRNA modification; tRNA-queuosine biosynthesis. Its function is as follows. Catalyzes the NADPH-dependent reduction of 7-cyano-7-deazaguanine (preQ0) to 7-aminomethyl-7-deazaguanine (preQ1). The chain is NADPH-dependent 7-cyano-7-deazaguanine reductase from Coxiella burnetii (strain CbuG_Q212) (Coxiella burnetii (strain Q212)).